The primary structure comprises 144 residues: Transcriptional regulator SlyA (144 aa).

Positions 2–135 (ESPLGSDLAR…LITLIAKLEH (134 aa)) constitute an HTH marR-type domain. Positions 49–72 (QIQLAKAIGIEQPSLVRTLDQLEE) form a DNA-binding region, H-T-H motif.

Belongs to the SlyA family. In terms of assembly, homodimer.

Functionally, transcription regulator that can specifically activate or repress expression of target genes. This is Transcriptional regulator SlyA from Shigella boydii serotype 18 (strain CDC 3083-94 / BS512).